A 156-amino-acid chain; its full sequence is Regulatory protein RecX (156 aa).

The protein belongs to the RecX family.

It localises to the cytoplasm. In terms of biological role, modulates RecA activity. The polypeptide is Regulatory protein RecX (Pseudomonas putida (strain W619)).